Here is a 184-residue protein sequence, read N- to C-terminus: MVSSSRIARSFTRYTSALQRHTIVTKIKQKFPCPRSRTQGQSRRSETHTISRRRSCRAIARSNLGRVSSVTLPWFSCPSPAVVALAKKPFRTARSSCPRSRKSSRCRKSLLSWTAHHLLDEFPKRRIWVFLSFRIGGSLHRRHAMEKNICSTRARIRLISAISLLSKPIVEIVVGYPQSEDRRL.

Positions 32-52 (PCPRSRTQGQSRRSETHTISR) are disordered.

It is found in the mitochondrion. This is an uncharacterized protein from Arabidopsis thaliana (Mouse-ear cress).